Reading from the N-terminus, the 145-residue chain is Transcriptional regulator MraZ (145 aa).

2 consecutive SpoVT-AbrB domains span residues 5 to 50 (TFNH…ALPQ) and 81 to 124 (AHEV…DKAA).

It belongs to the MraZ family. As to quaternary structure, forms oligomers.

It localises to the cytoplasm. The protein resides in the nucleoid. The protein is Transcriptional regulator MraZ of Anaeromyxobacter sp. (strain Fw109-5).